Reading from the N-terminus, the 431-residue chain is Enolase (431 aa).

Gln167 contacts (2R)-2-phosphoglycerate. Glu209 acts as the Proton donor in catalysis. Positions 246, 289, and 316 each coordinate Mg(2+). The (2R)-2-phosphoglycerate site is built by Lys341, Arg370, Ser371, and Lys392. The active-site Proton acceptor is Lys341.

It belongs to the enolase family. In terms of assembly, component of the RNA degradosome, a multiprotein complex involved in RNA processing and mRNA degradation. The cofactor is Mg(2+).

It localises to the cytoplasm. Its subcellular location is the secreted. It is found in the cell surface. The enzyme catalyses (2R)-2-phosphoglycerate = phosphoenolpyruvate + H2O. It functions in the pathway carbohydrate degradation; glycolysis; pyruvate from D-glyceraldehyde 3-phosphate: step 4/5. Its function is as follows. Catalyzes the reversible conversion of 2-phosphoglycerate (2-PG) into phosphoenolpyruvate (PEP). It is essential for the degradation of carbohydrates via glycolysis. The sequence is that of Enolase from Shewanella baltica (strain OS223).